Here is a 196-residue protein sequence, read N- to C-terminus: Holliday junction branch migration complex subunit RuvA (196 aa).

Residues 1 to 63 (MINKIYGKVI…ENELKLFGFL (63 aa)) form a domain I region. The segment at 64-139 (NSDERETFKS…KLLINNELES (76 aa)) is domain II. Residue Ser-139 is a region of interest, flexible linker. Positions 139-196 (SSLFRFKELEESIVSMGFDRKIVNSKLKEAFNLVEFSNLKDSEKEQFLFKEVLKRMSN) are domain III.

It belongs to the RuvA family. In terms of assembly, homotetramer. Forms an RuvA(8)-RuvB(12)-Holliday junction (HJ) complex. HJ DNA is sandwiched between 2 RuvA tetramers; dsDNA enters through RuvA and exits via RuvB. An RuvB hexamer assembles on each DNA strand where it exits the tetramer. Each RuvB hexamer is contacted by two RuvA subunits (via domain III) on 2 adjacent RuvB subunits; this complex drives branch migration. In the full resolvosome a probable DNA-RuvA(4)-RuvB(12)-RuvC(2) complex forms which resolves the HJ.

It localises to the cytoplasm. Functionally, the RuvA-RuvB-RuvC complex processes Holliday junction (HJ) DNA during genetic recombination and DNA repair, while the RuvA-RuvB complex plays an important role in the rescue of blocked DNA replication forks via replication fork reversal (RFR). RuvA specifically binds to HJ cruciform DNA, conferring on it an open structure. The RuvB hexamer acts as an ATP-dependent pump, pulling dsDNA into and through the RuvAB complex. HJ branch migration allows RuvC to scan DNA until it finds its consensus sequence, where it cleaves and resolves the cruciform DNA. The sequence is that of Holliday junction branch migration complex subunit RuvA from Borreliella afzelii (strain PKo) (Borrelia afzelii).